The following is a 370-amino-acid chain: F-box protein At3g20690 (370 aa).

The 45-residue stretch at methionine 1–lysine 45 folds into the F-box domain.

This chain is F-box protein At3g20690, found in Arabidopsis thaliana (Mouse-ear cress).